We begin with the raw amino-acid sequence, 136 residues long: Large ribosomal subunit protein bL19 (136 aa).

Belongs to the bacterial ribosomal protein bL19 family.

This protein is located at the 30S-50S ribosomal subunit interface and may play a role in the structure and function of the aminoacyl-tRNA binding site. The polypeptide is Large ribosomal subunit protein bL19 (Xylella fastidiosa (strain M23)).